A 241-amino-acid chain; its full sequence is Spheroidene monooxygenase (241 aa).

Belongs to the CrtA family. It depends on heme as a cofactor.

It carries out the reaction spheroidene + 4 reduced [2Fe-2S]-[ferredoxin] + 2 O2 + 4 H(+) = spheroiden-2-one + 4 oxidized [2Fe-2S]-[ferredoxin] + 3 H2O. The catalysed reaction is spirilloxanthin + 4 reduced [2Fe-2S]-[ferredoxin] + 2 O2 + 4 H(+) = 2-oxospirilloxanthin + 4 oxidized [2Fe-2S]-[ferredoxin] + 3 H2O. The enzyme catalyses 2-oxospirilloxanthin + 4 reduced [2Fe-2S]-[ferredoxin] + 2 O2 + 4 H(+) = 2,2'-dioxospirilloxanthin + 4 oxidized [2Fe-2S]-[ferredoxin] + 3 H2O. It catalyses the reaction spheroidene + 2 reduced [2Fe-2S]-[ferredoxin] + O2 + 2 H(+) = 2-hydroxyspheroidene + 2 oxidized [2Fe-2S]-[ferredoxin] + H2O. It carries out the reaction 2-hydroxyspheroidene + 2 reduced [2Fe-2S]-[ferredoxin] + O2 + 2 H(+) = 2,2-dihydroxyspheroidene + 2 oxidized [2Fe-2S]-[ferredoxin] + H2O. The catalysed reaction is 2,2-dihydroxyspheroidene = spheroiden-2-one + H2O. The enzyme catalyses spirilloxanthin + 2 reduced [2Fe-2S]-[ferredoxin] + O2 + 2 H(+) = 2-hydroxyspirilloxanthin + 2 oxidized [2Fe-2S]-[ferredoxin] + H2O. It catalyses the reaction 2-hydroxyspirilloxanthin + 2 reduced [2Fe-2S]-[ferredoxin] + O2 + 2 H(+) = 2,2-dihydroxyspirilloxanthin + 2 oxidized [2Fe-2S]-[ferredoxin] + H2O. It carries out the reaction 2,2-dihydroxyspirilloxanthin = 2-oxospirilloxanthin + H2O. The catalysed reaction is 2-oxospirilloxanthin + 2 reduced [2Fe-2S]-[ferredoxin] + O2 + 2 H(+) = 2'-hydroxy-2-oxospirilloxanthin + 2 oxidized [2Fe-2S]-[ferredoxin] + H2O. The enzyme catalyses 2'-hydroxy-2-oxospirilloxanthin + 2 reduced [2Fe-2S]-[ferredoxin] + O2 + 2 H(+) = 2',2'-dihydroxy-2-oxospirilloxanthin + 2 oxidized [2Fe-2S]-[ferredoxin] + H2O. It catalyses the reaction 2',2'-dihydroxy-2-oxospirilloxanthin = 2,2'-dioxospirilloxanthin + H2O. It participates in carotenoid biosynthesis; spheroidene biosynthesis. Its function is as follows. Involved in the biosynthesis of the carotenoid spheroidene. Catalyzes the introduction of one keto group at the C-2 position of spheroidene. In vitro, can also catalyze the introduction of two keto groups at the C-2 and C-2' positions of spirilloxanthin, but spirilloxanthin biosynthesis pathway is not present in R.capsulatus. This is Spheroidene monooxygenase from Rhodobacter capsulatus (strain ATCC BAA-309 / NBRC 16581 / SB1003).